Reading from the N-terminus, the 806-residue chain is Acetyl-CoA decarbonylase/synthase complex subunit alpha 1 (806 aa).

[4Fe-4S] cluster-binding residues include Cys73, Cys76, Cys77, Cys79, Cys84, and Cys94. His117 lines the CO pocket. [Ni-4Fe-4S] cluster-binding residues include His250, Cys278, and Cys323. 4Fe-4S ferredoxin-type domains follow at residues 407–436 (DEEF…IPEA) and 446–475 (SYLE…LNII). Positions 417, 420, 423, 427, 455, 458, 461, and 465 each coordinate [4Fe-4S] cluster. Positions 523, 552, and 587 each coordinate [Ni-4Fe-4S] cluster.

This sequence belongs to the Ni-containing carbon monoxide dehydrogenase family. In terms of assembly, heterotetramer of two alpha and two epsilon subunits. The ACDS complex is made up of alpha, epsilon, beta, gamma and delta subunits with a probable stoichiometry of (alpha(2)epsilon(2))(4)-beta(8)-(gamma(1)delta(1))(8). It depends on [4Fe-4S] cluster as a cofactor. [Ni-4Fe-4S] cluster serves as cofactor.

It catalyses the reaction CO + 2 oxidized [2Fe-2S]-[ferredoxin] + H2O = 2 reduced [2Fe-2S]-[ferredoxin] + CO2 + 2 H(+). It functions in the pathway one-carbon metabolism; methanogenesis from acetate. Part of the ACDS complex that catalyzes the reversible cleavage of acetyl-CoA, allowing growth on acetate as sole source of carbon and energy. The alpha-epsilon subcomponent functions as a carbon monoxide dehydrogenase. The sequence is that of Acetyl-CoA decarbonylase/synthase complex subunit alpha 1 from Methanosarcina acetivorans (strain ATCC 35395 / DSM 2834 / JCM 12185 / C2A).